Reading from the N-terminus, the 123-residue chain is Ig heavy chain V region HPCG13 (123 aa).

Residues glutamate 1–glycine 114 enclose the Ig-like domain.

The polypeptide is Ig heavy chain V region HPCG13 (Mus musculus (Mouse)).